Consider the following 444-residue polypeptide: Proline--tRNA ligase (444 aa).

It belongs to the class-II aminoacyl-tRNA synthetase family. ProS type 2 subfamily. Homodimer.

It localises to the cytoplasm. It catalyses the reaction tRNA(Pro) + L-proline + ATP = L-prolyl-tRNA(Pro) + AMP + diphosphate. Functionally, catalyzes the attachment of proline to tRNA(Pro) in a two-step reaction: proline is first activated by ATP to form Pro-AMP and then transferred to the acceptor end of tRNA(Pro). The protein is Proline--tRNA ligase of Methylobacterium sp. (strain 4-46).